The chain runs to 450 residues: tRNA-2-methylthio-N(6)-dimethylallyladenosine synthase (450 aa).

An MTTase N-terminal domain is found at 14 to 132 (GEFFIETWGC…FPNYLNEVKK (119 aa)). [4Fe-4S] cluster-binding residues include C23, C59, C93, C169, C173, and C176. One can recognise a Radical SAM core domain in the interval 155-385 (RKNSMKAFVT…VEVVNEISAK (231 aa)). The TRAM domain occupies 388-450 (KAYEGKIEEV…NSFSLTGEEI (63 aa)).

Belongs to the methylthiotransferase family. MiaB subfamily. As to quaternary structure, monomer. [4Fe-4S] cluster serves as cofactor.

The protein localises to the cytoplasm. It carries out the reaction N(6)-dimethylallyladenosine(37) in tRNA + (sulfur carrier)-SH + AH2 + 2 S-adenosyl-L-methionine = 2-methylsulfanyl-N(6)-dimethylallyladenosine(37) in tRNA + (sulfur carrier)-H + 5'-deoxyadenosine + L-methionine + A + S-adenosyl-L-homocysteine + 2 H(+). Catalyzes the methylthiolation of N6-(dimethylallyl)adenosine (i(6)A), leading to the formation of 2-methylthio-N6-(dimethylallyl)adenosine (ms(2)i(6)A) at position 37 in tRNAs that read codons beginning with uridine. This is tRNA-2-methylthio-N(6)-dimethylallyladenosine synthase from Clostridium botulinum (strain Langeland / NCTC 10281 / Type F).